Here is a 673-residue protein sequence, read N- to C-terminus: UvrABC system protein B (673 aa).

Residues 26-183 (EGLEDGLAHQ…RRLAELQYTR (158 aa)) form the Helicase ATP-binding domain. 39 to 46 (GVTGSGKT) provides a ligand contact to ATP. The short motif at 92–115 (YYDYYQPEAYVPSSDTFIEKDASV) is the Beta-hairpin element. One can recognise a Helicase C-terminal domain in the interval 431-597 (QVDDLLSEIR…GLNKKVVDIL (167 aa)). The tract at residues 608–627 (AKGRGKSRPIVEPDNVPMDM) is disordered. The UVR domain maps to 633–668 (QQKIHELEGLMMQHAQNLEFEEAAQIRDQLHQLREL).

Belongs to the UvrB family. Forms a heterotetramer with UvrA during the search for lesions. Interacts with UvrC in an incision complex.

It is found in the cytoplasm. In terms of biological role, the UvrABC repair system catalyzes the recognition and processing of DNA lesions. A damage recognition complex composed of 2 UvrA and 2 UvrB subunits scans DNA for abnormalities. Upon binding of the UvrA(2)B(2) complex to a putative damaged site, the DNA wraps around one UvrB monomer. DNA wrap is dependent on ATP binding by UvrB and probably causes local melting of the DNA helix, facilitating insertion of UvrB beta-hairpin between the DNA strands. Then UvrB probes one DNA strand for the presence of a lesion. If a lesion is found the UvrA subunits dissociate and the UvrB-DNA preincision complex is formed. This complex is subsequently bound by UvrC and the second UvrB is released. If no lesion is found, the DNA wraps around the other UvrB subunit that will check the other stand for damage. This chain is UvrABC system protein B, found in Escherichia fergusonii (strain ATCC 35469 / DSM 13698 / CCUG 18766 / IAM 14443 / JCM 21226 / LMG 7866 / NBRC 102419 / NCTC 12128 / CDC 0568-73).